Consider the following 32-residue polypeptide: Cytochrome b6-f complex subunit 8 (32 aa).

A helical membrane pass occupies residues 6–26 (IVSLAWAALMVVFTFSLSLVV).

Belongs to the PetN family. The 4 large subunits of the cytochrome b6-f complex are cytochrome b6, subunit IV (17 kDa polypeptide, PetD), cytochrome f and the Rieske protein, while the 4 small subunits are PetG, PetL, PetM and PetN. The complex functions as a dimer.

Its subcellular location is the plastid. It is found in the chloroplast thylakoid membrane. Component of the cytochrome b6-f complex, which mediates electron transfer between photosystem II (PSII) and photosystem I (PSI), cyclic electron flow around PSI, and state transitions. This chain is Cytochrome b6-f complex subunit 8, found in Illicium oligandrum (Star anise).